The sequence spans 62 residues: Photosystem II reaction center protein Z (62 aa).

2 helical membrane passes run 8–28 and 41–61; these read ALAA…VAYA and FLGS…NFLV.

This sequence belongs to the PsbZ family. PSII is composed of 1 copy each of membrane proteins PsbA, PsbB, PsbC, PsbD, PsbE, PsbF, PsbH, PsbI, PsbJ, PsbK, PsbL, PsbM, PsbT, PsbX, PsbY, PsbZ, Psb30/Ycf12, peripheral proteins PsbO, CyanoQ (PsbQ), PsbU, PsbV and a large number of cofactors. It forms dimeric complexes.

The protein resides in the cellular thylakoid membrane. In terms of biological role, may control the interaction of photosystem II (PSII) cores with the light-harvesting antenna, regulates electron flow through the 2 photosystem reaction centers. PSII is a light-driven water plastoquinone oxidoreductase, using light energy to abstract electrons from H(2)O, generating a proton gradient subsequently used for ATP formation. The protein is Photosystem II reaction center protein Z of Cyanothece sp. (strain PCC 7425 / ATCC 29141).